A 413-amino-acid chain; its full sequence is Glutamyl-tRNA reductase (413 aa).

Substrate-binding positions include 57–60 (TCNR), Ser-113, 118–120 (DFE), and Gln-124. Cys-58 functions as the Nucleophile in the catalytic mechanism. 193–198 (GTGKIG) serves as a coordination point for NADP(+).

The protein belongs to the glutamyl-tRNA reductase family. As to quaternary structure, homodimer.

It carries out the reaction (S)-4-amino-5-oxopentanoate + tRNA(Glu) + NADP(+) = L-glutamyl-tRNA(Glu) + NADPH + H(+). It functions in the pathway porphyrin-containing compound metabolism; protoporphyrin-IX biosynthesis; 5-aminolevulinate from L-glutamyl-tRNA(Glu): step 1/2. Catalyzes the NADPH-dependent reduction of glutamyl-tRNA(Glu) to glutamate 1-semialdehyde (GSA). The sequence is that of Glutamyl-tRNA reductase from Flavobacterium psychrophilum (strain ATCC 49511 / DSM 21280 / CIP 103535 / JIP02/86).